The primary structure comprises 462 residues: Microspherule protein 1 (462 aa).

Methionine 1 carries the post-translational modification N-acetylmethionine. Residues 1 to 130 (MDKDSQGLLD…KSKQPLQVTK (130 aa)) form a disordered region. Serine 22 carries the post-translational modification Phosphoserine. The span at 43–55 (PKRRSSSRFIKRK) shows a compositional bias: basic residues. The span at 81–90 (SGRCSGSEPS) shows a compositional bias: low complexity. The residue at position 102 (serine 102) is a Phosphoserine. Threonine 103 is modified (phosphothreonine). Over residues 103 to 112 (TPVPPSPAPT) the composition is skewed to pro residues. At serine 108 the chain carries Phosphoserine. Residues 113-123 (PGLTKRVKKSK) carry the Nuclear localization signal motif. Lysine 123 and lysine 130 each carry N6-acetyllysine. At serine 282 the chain carries Phosphoserine. The stretch at 301-335 (LEHELTVADRRQKREIRQLEQELHKWQVLVDSITG) forms a coiled coil. The 57-residue stretch at 363–419 (ITLGRATKDNQIDVDLSLEGPAWKISRKQGVIKLKNNGDFFIANEGRRPIYIDGRPV) folds into the FHA domain. A UBR5-degron motif is present at residues 389-396 (RKQGVIKL).

As to quaternary structure, component of the chromatin remodeling INO80 complex; specifically part of a complex module associated with the N-terminus of INO80. Component of some MLL1/MLL complex, at least composed of the core components KMT2A/MLL1, ASH2L, HCFC1, WDR5 and RBBP5, as well as the facultative components BACC1, CHD8, E2F6, HSP70, INO80C, KANSL1, LAS1L, MAX, MCRS1, MGA, KAT8/MOF, PELP1, PHF20, PRP31, RING2, RUVB1/TIP49A, RUVB2/TIP49B, SENP3, TAF1, TAF4, TAF6, TAF7, TAF9 and TEX10. Component of the NSL complex at least composed of MOF/KAT8, KANSL1, KANSL2, KANSL3, MCRS1, PHF20, OGT1/OGT, WDR5 and HCFC1. Interacts with NOP2. Interacts with PINX1. Interacts with TERT. Interacts with CCDC85B. Interacts with DAXX. Interacts (via N-terminus) with FMR1 (via phosphorylated form). Interacts with FXR1 and FXR2. Interacts (via C-terminus) with NDE1 (via C-terminus); phosphorylation of NDE1 inhibits the interaction. Interacts (via C-terminus) with ZNF375. Interacts (via C-terminus) with active GTP-bound RHEB (via N-terminus) under conditions of high amino acid concentration; the interaction promotes mTORC1 complex activation by RHEB. Interacts (via N-terminus) with the mTORC1 complex; the interaction ensures mTORC1 activation by RHEB. Interacts with DYNC1I1; the interaction is required for the proper distribution of centriolar satellites. Interacts with TTBK2; the interaction is required for recruitment of TTBK2 to the mother centriole. Interacts with KIF2A; the interaction occurs during mitosis and facilitates chromosome alignment. Post-translationally, ubiquitinated by UBR5 when not assembled in the INO80 complex, leading to its degradation: UBR5 recognizes and binds a degron that is not accessible when MCRS1 is part of the INO80 complex. In terms of processing, phosphorylated by AURKA on Ser-35 and/or Ser-36 during mitosis which is required for kinetochore fiber assembly and mitotic progression but not for spindle localization or for chromosome-induced microtuble aster formation. Also phosphorylated by AURKA on Ser-85 and/or Ser-87. Phosphorylated by TTK/MPS1 which enhances recruitment of KIF2A to the minus end of spindle microtubules and facilitates precise chromosome segregation.

Its subcellular location is the nucleus. It is found in the nucleolus. It localises to the cytoplasm. The protein resides in the cytoskeleton. The protein localises to the microtubule organizing center. Its subcellular location is the centrosome. It is found in the spindle pole. It localises to the chromosome. The protein resides in the centromere. The protein localises to the kinetochore. Its subcellular location is the lysosome. It is found in the centriolar satellite. Modulates the transcription repressor activity of DAXX by recruiting it to the nucleolus. As part of the NSL complex it may be involved in acetylation of nucleosomal histone H4 on several lysine residues. Putative regulatory component of the chromatin remodeling INO80 complex which is involved in transcriptional regulation, DNA replication and probably DNA repair. May also be an inhibitor of TERT telomerase activity. Binds to G-quadruplex structures in mRNA. Binds to RNA homomer poly(G) and poly(U). Maintains RHEB at the lysosome in its active GTP-bound form and prevents its interaction with the mTORC1 complex inhibitor TSC2, ensuring activation of the mTORC1 complex by RHEB. Stabilizes the minus ends of kinetochore fibers by protecting them from depolymerization, ensuring functional spindle assembly during mitosis. Following phosphorylation by TTK/MPS1, enhances recruitment of KIF2A to the minus ends of mitotic spindle microtubules which promotes chromosome alignment. Regulates the morphology of microtubule minus ends in mitotic spindle by maintaining them in a closed conformation characterized by the presence of an electron-dense cap. Regulates G2/M transition and spindle assembly during oocyte meiosis. Mediates histone modifications and transcriptional regulation in germinal vesicle oocytes which are required for meiotic progression. Also regulates microtubule nucleation and spindle assembly by activating aurora kinases during oocyte meiosis. Contributes to the establishment of centriolar satellites and also plays a role in primary cilium formation by recruiting TTBK2 to the mother centriole which is necessary for removal of the CP110 cap from the mother centriole, an early step in ciliogenesis. Required for epiblast development during early embryogenesis. Essential for cell viability. The protein is Microspherule protein 1 (Mcrs1) of Mus musculus (Mouse).